The primary structure comprises 248 residues: Tetraspanin-16 (248 aa).

Topologically, residues 1–7 are cytoplasmic; sequence MSEIRTG. The chain crosses the membrane as a helical span at residues 8-28; sequence FLTMATIILICIGLTMTGTGL. Topologically, residues 29 to 44 are extracellular; sequence YYRKTVSKCIRETDGS. The helical transmembrane segment at 45–65 threads the bilayer; it reads FVVIGLLLLVIPQFALYAICC. Topologically, residues 66 to 69 are cytoplasmic; sequence HSKR. A helical transmembrane segment spans residues 70-90; the sequence is MFTIYIYAMIFVSIVLGGYSL. At 91–208 the chain is on the extracellular side; that stretch reads KCFIYNTTFG…MSILKAIVHQ (118 aa). Asn-96 and Asn-141 each carry an N-linked (GlcNAc...) asparagine glycan. The helical transmembrane segment at 209–229 threads the bilayer; sequence WKYLSMFSYPALFLVCLSLAI. Residues 230 to 248 lie on the Cytoplasmic side of the membrane; sequence SRSIMDTFDEPDDYRGYYS.

Belongs to the tetraspanin (TM4SF) family.

The protein resides in the membrane. Its function is as follows. May be involved in the regulation of cell differentiation. This is Tetraspanin-16 (TET16) from Arabidopsis thaliana (Mouse-ear cress).